The primary structure comprises 348 residues: Nitrogenase vanadium-iron protein beta chain (348 aa).

Residues C31, C56, C115, and S153 each contribute to the [8Fe-7S] cluster site.

This sequence belongs to the NifD/NifK/NifE/NifN family. Hexamer of two alpha, two beta, and two delta chains. [8Fe-7S] cluster is required as a cofactor.

It catalyses the reaction N2 + 8 reduced [2Fe-2S]-[ferredoxin] + 16 ATP + 16 H2O = H2 + 8 oxidized [2Fe-2S]-[ferredoxin] + 2 NH4(+) + 16 ADP + 16 phosphate + 6 H(+). This vanadium-iron protein is part of the nitrogenase complex that catalyzes the key enzymatic reactions in nitrogen fixation. The chain is Nitrogenase vanadium-iron protein beta chain (vnfK) from Azotobacter salinestris.